The chain runs to 399 residues: Acetate kinase (399 aa).

Residue Asn7 participates in Mg(2+) binding. Residue Lys14 participates in ATP binding. Arg90 is a binding site for substrate. The Proton donor/acceptor role is filled by Asp147. Residues 207 to 211 (HLGNG), 282 to 284 (DFR), and 330 to 334 (GIGEN) each bind ATP. Residue Glu385 participates in Mg(2+) binding.

Belongs to the acetokinase family. Homodimer. Mg(2+) is required as a cofactor. Mn(2+) serves as cofactor.

Its subcellular location is the cytoplasm. The enzyme catalyses acetate + ATP = acetyl phosphate + ADP. Its pathway is metabolic intermediate biosynthesis; acetyl-CoA biosynthesis; acetyl-CoA from acetate: step 1/2. Catalyzes the formation of acetyl phosphate from acetate and ATP. Can also catalyze the reverse reaction. The protein is Acetate kinase of Caldicellulosiruptor saccharolyticus (strain ATCC 43494 / DSM 8903 / Tp8T 6331).